The following is a 127-amino-acid chain: Glycine cleavage system H protein (127 aa).

Residues 22-104 form the Lipoyl-binding domain; it reads KVRIGITHFA…YEKAWMIVVE (83 aa). An N6-lipoyllysine modification is found at lysine 63.

The protein belongs to the GcvH family. The glycine cleavage system is composed of four proteins: P, T, L and H. It depends on (R)-lipoate as a cofactor.

The glycine cleavage system catalyzes the degradation of glycine. The H protein shuttles the methylamine group of glycine from the P protein to the T protein. In terms of biological role, is also involved in protein lipoylation via its role as an octanoyl/lipoyl carrier protein intermediate. The protein is Glycine cleavage system H protein of Bacillus pumilus (strain SAFR-032).